We begin with the raw amino-acid sequence, 402 residues long: p-cumate 2,3-dioxygenase system, ferredoxin--NAD(+) reductase component (402 aa).

FAD-binding residues include Ala-16, Lys-51, Val-83, Arg-131, and Asp-275.

This sequence belongs to the FAD-dependent oxidoreductase family. In terms of assembly, the p-cumate 2,3-dioxygenase multicomponent enzyme system is composed of an electron transfer component and a dioxygenase component (iron sulfur protein (ISP)). The electron transfer component is composed of a ferredoxin reductase (CmtAa) and a ferredoxin (CmtAd), and the dioxygenase component is formed of a large alpha subunit (CmtAb) and a small beta subunit (CmtAc). FAD is required as a cofactor.

The enzyme catalyses 2 reduced [2Fe-2S]-[ferredoxin] + NAD(+) + H(+) = 2 oxidized [2Fe-2S]-[ferredoxin] + NADH. Its pathway is aromatic compound metabolism; p-cumate degradation; acetaldehyde and pyruvate from p-cumate. Component of the p-cumate 2,3-dioxygenase multicomponent enzyme system which catalyzes the incorporation of both atoms of molecular oxygen into p-cumate to form cis-2,3-dihydroxy-2,3-dihydro-p-cumate. Ferredoxin reductase catalyzes the transfer of electrons from NADH to ferredoxin (CmtAd). The protein is p-cumate 2,3-dioxygenase system, ferredoxin--NAD(+) reductase component of Pseudomonas putida (Arthrobacter siderocapsulatus).